Here is a 412-residue protein sequence, read N- to C-terminus: Cysteate synthase (412 aa).

At Lys105 the chain carries N6-(pyridoxal phosphate)lysine. Pyridoxal 5'-phosphate-binding residues include Asn131 and Thr382.

Belongs to the threonine synthase family. Cysteate synthase subfamily. As to quaternary structure, homotrimer. Pyridoxal 5'-phosphate is required as a cofactor.

It carries out the reaction O-phospho-L-serine + sulfite + H(+) = L-cysteate + phosphate. Its pathway is cofactor biosynthesis; coenzyme M biosynthesis. Specifically catalyzes the beta-elimination of phosphate from L-phosphoserine and the beta-addition of sulfite to the dehydroalanine intermediate to produce L-cysteate. This chain is Cysteate synthase, found in Methanocorpusculum labreanum (strain ATCC 43576 / DSM 4855 / Z).